The chain runs to 258 residues: Pimeloyl-[acyl-carrier protein] methyl ester esterase (258 aa).

The AB hydrolase-1 domain maps to 16–244 (LVLVHGWGMN…QSSHAPFMTE (229 aa)). Substrate contacts are provided by residues tryptophan 22, 82 to 83 (SL), and 146 to 150 (FMALQ). The active-site Nucleophile is the serine 82. Catalysis depends on residues aspartate 210 and histidine 238. Histidine 238 is a binding site for substrate.

This sequence belongs to the AB hydrolase superfamily. Carboxylesterase BioH family. Monomer.

It is found in the cytoplasm. It catalyses the reaction 6-carboxyhexanoyl-[ACP] methyl ester + H2O = 6-carboxyhexanoyl-[ACP] + methanol + H(+). The protein operates within cofactor biosynthesis; biotin biosynthesis. Its function is as follows. The physiological role of BioH is to remove the methyl group introduced by BioC when the pimeloyl moiety is complete. It allows to synthesize pimeloyl-ACP via the fatty acid synthetic pathway through the hydrolysis of the ester bonds of pimeloyl-ACP esters. This is Pimeloyl-[acyl-carrier protein] methyl ester esterase from Vibrio atlanticus (strain LGP32) (Vibrio splendidus (strain Mel32)).